Consider the following 176-residue polypeptide: MAVRTIITEGDPRLRQKAIRIRVVDEEVRQLARDLWDTVRAARGLGLAAPQIGVLRRIIVVAIPPDYVEEGDPGVELTLINPEIVRASGRQVGLEGCLSIPGWYGEVPRSMHVTVKALDLDGREVRVKGSGLLARVLQHEIDHLEGILFVDRIEDRSTLRYIPDEEEETAEAATGT.

2 residues coordinate Fe cation: C97 and H139. E140 is an active-site residue. H143 contributes to the Fe cation binding site.

Belongs to the polypeptide deformylase family. Requires Fe(2+) as cofactor.

The enzyme catalyses N-terminal N-formyl-L-methionyl-[peptide] + H2O = N-terminal L-methionyl-[peptide] + formate. Its function is as follows. Removes the formyl group from the N-terminal Met of newly synthesized proteins. Requires at least a dipeptide for an efficient rate of reaction. N-terminal L-methionine is a prerequisite for activity but the enzyme has broad specificity at other positions. This chain is Peptide deformylase, found in Thermomicrobium roseum (strain ATCC 27502 / DSM 5159 / P-2).